A 271-amino-acid polypeptide reads, in one-letter code: Mannosyl-3-phosphoglycerate phosphatase (271 aa).

Asp-13 serves as the catalytic Nucleophile. Mg(2+) contacts are provided by Asp-13, Asp-15, and Asp-214.

It belongs to the HAD-like hydrolase superfamily. MPGP family. Mg(2+) serves as cofactor.

Its subcellular location is the cytoplasm. It catalyses the reaction 2-O-(alpha-D-mannosyl)-3-phosphoglycerate + H2O = (2R)-2-O-(alpha-D-mannosyl)-glycerate + phosphate. The chain is Mannosyl-3-phosphoglycerate phosphatase from Escherichia coli O45:K1 (strain S88 / ExPEC).